A 278-amino-acid polypeptide reads, in one-letter code: HTH-type transcriptional activator RhaS (278 aa).

The 99-residue stretch at 174–272 (NLLLAWLEDH…NWSPRDIRQG (99 aa)) folds into the HTH araC/xylS-type domain. DNA-binding regions (H-T-H motif) lie at residues 191 to 212 (DAVA…KQQT) and 239 to 262 (VTDI…RREF).

Binds DNA as a dimer.

Its subcellular location is the cytoplasm. Functionally, activates expression of the rhaBAD and rhaT operons. This Escherichia coli (strain SE11) protein is HTH-type transcriptional activator RhaS.